Consider the following 152-residue polypeptide: 1,4-dihydroxy-2-naphthoyl-CoA hydrolase (152 aa).

The active site involves D20.

This sequence belongs to the 4-hydroxybenzoyl-CoA thioesterase family. DHNA-CoA hydrolase subfamily.

The catalysed reaction is 1,4-dihydroxy-2-naphthoyl-CoA + H2O = 1,4-dihydroxy-2-naphthoate + CoA + H(+). It functions in the pathway cofactor biosynthesis; phylloquinone biosynthesis. The protein operates within quinol/quinone metabolism; 1,4-dihydroxy-2-naphthoate biosynthesis; 1,4-dihydroxy-2-naphthoate from chorismate: step 7/7. In terms of biological role, catalyzes the hydrolysis of 1,4-dihydroxy-2-naphthoyl-CoA (DHNA-CoA) to 1,4-dihydroxy-2-naphthoate (DHNA), a reaction involved in phylloquinone (vitamin K1) biosynthesis. This chain is 1,4-dihydroxy-2-naphthoyl-CoA hydrolase, found in Synechococcus sp. (strain CC9311).